Reading from the N-terminus, the 338-residue chain is Fructose-1,6-bisphosphatase 1 (338 aa).

Thr-2 is modified (N-acetylthreonine). AMP-binding positions include Val-18–Gly-22 and Thr-28–Thr-32. Asp-69 and Glu-98 together coordinate Mg(2+). Lys-113–Tyr-114 contacts AMP. Residues Asp-119, Leu-121, and Asp-122 each contribute to the Mg(2+) site. Asp-122–Ser-125 contacts substrate. Position 141 (Arg-141) interacts with AMP. Lys-151 bears the N6-succinyllysine mark. Ser-208 is modified (phosphoserine; by PKA). Substrate-binding positions include Asn-213–Tyr-216, Arg-244–Met-249, Tyr-265, and Lys-275–Arg-277. Phosphotyrosine is present on residues Tyr-216, Tyr-245, and Tyr-265. Glu-281 is a binding site for Mg(2+).

This sequence belongs to the FBPase class 1 family. In terms of assembly, homotetramer. Requires Mg(2+) as cofactor.

It carries out the reaction beta-D-fructose 1,6-bisphosphate + H2O = beta-D-fructose 6-phosphate + phosphate. Its pathway is carbohydrate biosynthesis; gluconeogenesis. With respect to regulation, subject to complex allosteric regulation. The enzyme can assume an active R-state, or an inactive T-state. Intermediate conformations may exist. AMP acts as an allosteric inhibitor. AMP binding affects the turnover of bound substrate and not the affinity for substrate. Fructose 2,6-bisphosphate acts as a competitive inhibitor. Fructose 2,6-bisphosphate and AMP have synergistic effects. In terms of biological role, catalyzes the hydrolysis of fructose 1,6-bisphosphate to fructose 6-phosphate in the presence of divalent cations, acting as a rate-limiting enzyme in gluconeogenesis. Plays a role in regulating glucose sensing and insulin secretion of pancreatic beta-cells. Appears to modulate glycerol gluconeogenesis in liver. Important regulator of appetite and adiposity; increased expression of the protein in liver after nutrient excess increases circulating satiety hormones and reduces appetite-stimulating neuropeptides and thus seems to provide a feedback mechanism to limit weight gain. The chain is Fructose-1,6-bisphosphatase 1 (FBP1) from Sus scrofa (Pig).